The sequence spans 498 residues: Glutathione hydrolase 6 (498 aa).

Over 1 to 49 (MDATTGAVLYQKLQLWEPGMESEEEEEEEEIAEPLVLSLRRLQNTPGNK) the chain is Cytoplasmic. The helical; Signal-anchor for type II membrane protein transmembrane segment at 50–70 (VGGLPGAWTRLLAGLLLLAVS) threads the bilayer. The Extracellular portion of the chain corresponds to 71-498 (SSLALRQLQG…PSGCCPFQGY (428 aa)). N162, N167, and N376 each carry an N-linked (GlcNAc...) asparagine glycan.

It belongs to the gamma-glutamyltransferase family. In terms of assembly, heterodimer composed of the light and heavy chains. The active site is located in the light chain. Cleaved by autocatalysis into a large and a small subunit and the autocatalytic cleavage is essential to the functional activation of the enzyme.

The protein localises to the membrane. It carries out the reaction an N-terminal (5-L-glutamyl)-[peptide] + an alpha-amino acid = 5-L-glutamyl amino acid + an N-terminal L-alpha-aminoacyl-[peptide]. The enzyme catalyses glutathione + H2O = L-cysteinylglycine + L-glutamate. The catalysed reaction is an S-substituted glutathione + H2O = an S-substituted L-cysteinylglycine + L-glutamate. It participates in sulfur metabolism; glutathione metabolism. Its function is as follows. Hydrolyzes and transfers gamma-glutamyl moieties from glutathione and other gamma-glutamyl compounds to acceptors. The chain is Glutathione hydrolase 6 from Rattus norvegicus (Rat).